The sequence spans 524 residues: Tubulin-specific chaperone E (524 aa).

Serine 2 is modified (N-acetylserine). Residues 27-71 (GAVPPVAGLWLGVEWDNPERGKHDGSHEGTMYFKCRHPTGGSFVR) enclose the CAP-Gly domain. LRR repeat units follow at residues 154-175 (NIRV…VLIA), 180-201 (DLEA…PTLT), 206-227 (TLKT…HCAP), 231-253 (VLEE…NVLQ), 254-275 (KMRL…SLIA), 279-300 (RLEH…DAEI), and 309-330 (ALKY…NELD). The LRRCT domain occupies 343–381 (NPLSKADKAEEIIIAKIAQLRTLNRCQILPEERRGAELD). At lysine 460 the chain carries N6-acetyllysine. Serine 492 carries the post-translational modification Phosphoserine.

This sequence belongs to the TBCE family. Supercomplex made of cofactors A to E. Cofactors A and D function by capturing and stabilizing tubulin in a quasi-native conformation. Cofactor E binds to the cofactor D-tubulin complex; interaction with cofactor C then causes the release of tubulin polypeptides that are committed to the native state. Cofactors B and E can form a heterodimer which binds to alpha-tubulin and enhances their ability to dissociate tubulin heterodimers. Interacts with TBCD. In terms of tissue distribution, ubiquitously expressed.

The protein localises to the cytoplasm. The protein resides in the cytoskeleton. Functionally, tubulin-folding protein; involved in the second step of the tubulin folding pathway and in the regulation of tubulin heterodimer dissociation. Required for correct organization of microtubule cytoskeleton and mitotic splindle, and maintenance of the neuronal microtubule network. This chain is Tubulin-specific chaperone E (Tbce), found in Mus musculus (Mouse).